Consider the following 7639-residue polypeptide: Nonribosomal peptide synthetase 4 (7639 aa).

Residues 244–636 (WQGAMRPDAE…AGRKDAQIKF (393 aa)) are adenylation 1. Residues 776-852 (TFSNGTESQL…ALARHVKEIE (77 aa)) enclose the Carrier 1 domain. Serine 813 bears the O-(pantetheine 4'-phosphoryl)serine mark. The segment at 865–1295 (FELSPIQRLY…EQNLSLLVES (431 aa)) is epimerization 1. Residues 1337–1767 (VEDIYPCSPM…HLGPRHHQQI (431 aa)) form a condensation 1 region. The interval 1786–2181 (FEEQAILRPE…FGRKDTQVKL (396 aa)) is adenylation 2. The 77-residue stretch at 2313 to 2389 (APASDMEKQL…DMAQSALPLS (77 aa)) folds into the Carrier 2 domain. Position 2350 is an O-(pantetheine 4'-phosphoryl)serine (serine 2350). Positions 2426–2852 (VEDIYPCTPL…LISTRDYQSL (427 aa)) are condensation 2. The tract at residues 2878–3269 (QPLDKLAVCA…QGRKDNQVKI (392 aa)) is adenylation 3. The region spanning 3403-3479 (REATETETKL…KLASFVQAVE (77 aa)) is the Carrier 3 domain. Serine 3440 is modified (O-(pantetheine 4'-phosphoryl)serine). Residues 3491–3928 (AFPLSPIQKL…RMTQAKAEPQ (438 aa)) form an epimerization 2 region. The tract at residues 3961-4389 (EAVYPCSPVQ…VSDDCAQQLT (429 aa)) is condensation 3. An adenylation 4 region spans residues 4407–4810 (FERNVQSLPH…VSRKDTQIKL (404 aa)). The Carrier 4 domain occupies 4944-5020 (APTTMMQRKL…EMATCCGHSE (77 aa)). Serine 4981 carries the post-translational modification O-(pantetheine 4'-phosphoryl)serine. A condensation 4 region spans residues 5058-5478 (QDLYPCSSLQ…QFCSEEDLQM (421 aa)). Positions 5498–5900 (FWQSVATYHD…IGRKDNQVKL (403 aa)) are adenylation 5. Positions 6039 to 6115 (TDTTFVGQLL…DLVTLIEKEG (77 aa)) constitute a Carrier 5 domain. Serine 6076 bears the O-(pantetheine 4'-phosphoryl)serine mark. The segment at 6133–6567 (FALSPIQQLF…EVLGNMAMEL (435 aa)) is epimerization 3. The condensation 5 stretch occupies residues 6607–7032 (VEDMYPCSPM…EALSHLRVSQ (426 aa)). Residues 7088–7164 (RDKDQVYNKL…TLLNCLRDKS (77 aa)) form the Carrier 6 domain. Serine 7125 is subject to O-(pantetheine 4'-phosphoryl)serine. The interval 7254–7603 (LDGEGPLDVA…SNTEVCFLYR (350 aa)) is condensation 6.

Belongs to the NRP synthetase family.

It carries out the reaction D-allo-threonine + D-leucine + D-alanine + L-proline + 2 L-leucine + A = fusahexin + AH2 + 6 H2O. The protein operates within secondary metabolite biosynthesis. Functionally, nonribosomal peptide synthetase; part of the gene cluster that mediates the biosynthesis of the fusahexin, a cyclic hydrophobic hexapeptide with the amino acid sequence cyclo-(D-Ala-L-Leu-D-allo-Thr-L-Pro-D-Leu-L-Leu) that plays an important role in cell surface hydrophobicity. Fusahexin might also play a role in virulence, sensitivity to osmotic stress and oxidative stress. NRPS4 is the only enzyme within the cluster and its 5 catalytic modules are sufficient to produce fusahexin. The modules 1 to 4 incorporate respectively D-alanine, L-leucine, D-allo-threonine, and L-proline, which is supported by the presence of epimerase domains in modules 1 and 3, which incorporate D-amino acids. The terminal module is responsible for incorporation of the two adjacent leucine units, where the epimerase domain is only used to convert the first unit to D-leucine. The terminal condensation domain (Ct) is involved in cyclization with D-alanine and thereby releasing of fusahexin. The sequence is that of Nonribosomal peptide synthetase 4 from Gibberella zeae (strain ATCC MYA-4620 / CBS 123657 / FGSC 9075 / NRRL 31084 / PH-1) (Wheat head blight fungus).